The chain runs to 138 residues: uncharacterized protein (138 aa).

3 helical membrane-spanning segments follow: residues 12–32, 62–82, and 111–131; these read LHFL…VLPI, LIAV…FSVL, and FHWV…LICS.

Its subcellular location is the cell membrane. This is an uncharacterized protein from Haemophilus influenzae (strain ATCC 51907 / DSM 11121 / KW20 / Rd).